A 635-amino-acid polypeptide reads, in one-letter code: Threonine--tRNA ligase (635 aa).

In terms of domain architecture, TGS spans 1 to 61 (MIVITLPDGS…EGDARLAIVT (61 aa)). Positions 242–533 (DHRKLGRELD…LIEQHAGALP (292 aa)) are catalytic. 3 residues coordinate Zn(2+): C333, H384, and H510.

Belongs to the class-II aminoacyl-tRNA synthetase family. Homodimer. The cofactor is Zn(2+).

Its subcellular location is the cytoplasm. It carries out the reaction tRNA(Thr) + L-threonine + ATP = L-threonyl-tRNA(Thr) + AMP + diphosphate + H(+). Catalyzes the attachment of threonine to tRNA(Thr) in a two-step reaction: L-threonine is first activated by ATP to form Thr-AMP and then transferred to the acceptor end of tRNA(Thr). Also edits incorrectly charged L-seryl-tRNA(Thr). The chain is Threonine--tRNA ligase from Methylibium petroleiphilum (strain ATCC BAA-1232 / LMG 22953 / PM1).